We begin with the raw amino-acid sequence, 587 residues long: Kelch-like protein 3 (587 aa).

A disordered region spans residues methionine 1 to arginine 24. The region spanning cysteine 50–glutamate 117 is the BTB domain. One can recognise a BACK domain in the interval cysteine 152 to glutamate 254. Threonine 295 is modified (phosphothreonine). 6 Kelch repeats span residues valine 302–glycine 347, histidine 348–aspartate 394, leucine 396–glycine 441, lysine 442–glycine 490, glutamine 491–glycine 537, and leucine 539–serine 585. Residue threonine 375 is modified to Phosphothreonine. Phosphoserine occurs at positions 376 and 433.

It belongs to the KLHL3 family. Homodimer. Component of the BCR(KLHL3) E3 ubiquitin ligase complex, at least composed of CUL3 and KLHL3 and RBX1. Interacts with CLDN8. In terms of processing, phosphorylation at Ser-433 by PKA or PKC decreases the interaction with WNK1 and WNK4, leading to inhibit their degradation by the BCR(KLHL3) complex. Phosphorylated at Ser-433 by PKC in response to angiotensin II signaling, decreasing ability to promote degradation of WNK1 and WNK4, leading to activation of Na-Cl cotransporter SLC12A3/NCC. Phosphorylation at Ser-433 is increased by insulin. Dephosphorylated at Ser-433 by calcineurin PPP3CA, promoting degradation of WNK1 and WNK4.

Its subcellular location is the cytoplasm. It localises to the cytoskeleton. The protein localises to the cytosol. It participates in protein modification; protein ubiquitination. Functionally, substrate-specific adapter of a BCR (BTB-CUL3-RBX1) E3 ubiquitin ligase complex that acts as a regulator of ion transport in the distal nephron. The BCR(KLHL3) complex acts by mediating ubiquitination and degradation of WNK1 and WNK4, two activators of Na-Cl cotransporter SLC12A3/NCC in distal convoluted tubule cells of kidney, thereby regulating NaCl reabsorption. The BCR(KLHL3) complex also mediates ubiquitination and degradation of WNK3. The BCR(KLHL3) complex also mediates ubiquitination of CLDN8, a tight-junction protein required for paracellular chloride transport in the kidney, leading to its degradation. The chain is Kelch-like protein 3 (Klhl3) from Rattus norvegicus (Rat).